Here is a 203-residue protein sequence, read N- to C-terminus: Endo-type membrane-bound lytic murein transglycosylase A (203 aa).

The signal sequence occupies residues 1–15 (MKLRWFAFLVVLLAG). Residue Cys16 is the site of N-palmitoyl cysteine attachment. A lipid anchor (S-diacylglycerol cysteine) is attached at Cys16.

This sequence belongs to the transglycosylase Slt family.

It localises to the cell outer membrane. The enzyme catalyses Endolytic cleavage of the (1-&gt;4)-beta-glycosidic linkage between N-acetylmuramic acid (MurNAc) and N-acetylglucosamine (GlcNAc) residues in peptidoglycan with concomitant formation of a 1,6-anhydrobond in the MurNAc residue.. Murein-degrading enzyme. May play a role in recycling of muropeptides during cell elongation and/or cell division. Preferentially cleaves at a distance of more than two disaccharide units from the ends of the glycan chain. The sequence is that of Endo-type membrane-bound lytic murein transglycosylase A from Citrobacter koseri (strain ATCC BAA-895 / CDC 4225-83 / SGSC4696).